A 436-amino-acid polypeptide reads, in one-letter code: MQVSVENTSALERRMTIGVPAERIETEVNKRLQQTARKAKIPGFRPGKVPMSVIRQRYEDGARQEALGDLIQATFYEAVVEQKLNPAGAPAVEPKSFEKGKDLEYVATFEVFPEFTVAGFDTIAVERLSADVVDSDLDNMLEVLRKQNVRFEVADRAAQNEDQLNIDFVGKVDGEVFAGGSATATQLVLGSGRMIPGFEDGLVGAKAGEERVLNVTFPEDYQNLELAGKAAEFTVTVNTVSEPKLPELNEEFFKQFGIKETGIEGFRTEVRKNMERELRQAIKSKVKNQVMDGLLAANPIEVPKALLENEVNRLRVQAVQQFGGNIKPDQLPAELFEEQAKRRVELGLIVAEVVKQFDLKPDDARVREMIQEMASAYQEPEQVVAWYYKNEQQMNEVRSVVLEEQVVDTVLQKASVTDKSVSYEEAVKPVEAPKAD.

Residues 161–246 (EDQLNIDFVG…VNTVSEPKLP (86 aa)) enclose the PPIase FKBP-type domain.

This sequence belongs to the FKBP-type PPIase family. Tig subfamily.

The protein resides in the cytoplasm. It carries out the reaction [protein]-peptidylproline (omega=180) = [protein]-peptidylproline (omega=0). In terms of biological role, involved in protein export. Acts as a chaperone by maintaining the newly synthesized protein in an open conformation. Functions as a peptidyl-prolyl cis-trans isomerase. The sequence is that of Trigger factor from Pseudomonas savastanoi pv. phaseolicola (strain 1448A / Race 6) (Pseudomonas syringae pv. phaseolicola (strain 1448A / Race 6)).